The primary structure comprises 248 residues: Glucosamine-6-phosphate isomerase (248 aa).

The active-site Proton acceptor; for enolization step is the D68. E137 (for ring-opening step) is an active-site residue. Residue H139 is the Proton acceptor; for ring-opening step of the active site. E144 acts as the For ring-opening step in catalysis.

The protein belongs to the glucosamine/galactosamine-6-phosphate isomerase family. In terms of assembly, monomer.

The enzyme catalyses alpha-D-glucosamine 6-phosphate + H2O = beta-D-fructose 6-phosphate + NH4(+). The chain is Glucosamine-6-phosphate isomerase (NAG1) from Candida albicans (strain SC5314 / ATCC MYA-2876) (Yeast).